Reading from the N-terminus, the 359-residue chain is 3-dehydroquinate synthase (359 aa).

NAD(+) contacts are provided by residues 71-76 (DGEAYK), 105-109 (GVIGD), 129-130 (TT), Lys142, and Lys151. Zn(2+)-binding residues include Glu184, His247, and His264.

The protein belongs to the sugar phosphate cyclases superfamily. Dehydroquinate synthase family. Co(2+) is required as a cofactor. The cofactor is Zn(2+). Requires NAD(+) as cofactor.

The protein localises to the cytoplasm. The catalysed reaction is 7-phospho-2-dehydro-3-deoxy-D-arabino-heptonate = 3-dehydroquinate + phosphate. It functions in the pathway metabolic intermediate biosynthesis; chorismate biosynthesis; chorismate from D-erythrose 4-phosphate and phosphoenolpyruvate: step 2/7. Catalyzes the conversion of 3-deoxy-D-arabino-heptulosonate 7-phosphate (DAHP) to dehydroquinate (DHQ). This is 3-dehydroquinate synthase from Burkholderia mallei (strain NCTC 10247).